We begin with the raw amino-acid sequence, 331 residues long: Holliday junction branch migration complex subunit RuvB (331 aa).

The interval 1 to 178 (MRNSIFEQEE…FGITLRLDFY (178 aa)) is large ATPase domain (RuvB-L). Residues Leu17, Arg18, Gly59, Lys62, Thr63, Thr64, 125-127 (EDY), Arg168, Tyr178, and Arg215 contribute to the ATP site. Thr63 serves as a coordination point for Mg(2+). The tract at residues 179 to 249 (TVSELLQLLQ…FADLALNKME (71 aa)) is small ATPAse domain (RuvB-S). The interval 252–331 (QFGLDKLDYT…LSTINSARLP (80 aa)) is head domain (RuvB-H). Residues Arg307 and Arg312 each coordinate DNA.

The protein belongs to the RuvB family. As to quaternary structure, homohexamer. Forms an RuvA(8)-RuvB(12)-Holliday junction (HJ) complex. HJ DNA is sandwiched between 2 RuvA tetramers; dsDNA enters through RuvA and exits via RuvB. An RuvB hexamer assembles on each DNA strand where it exits the tetramer. Each RuvB hexamer is contacted by two RuvA subunits (via domain III) on 2 adjacent RuvB subunits; this complex drives branch migration. In the full resolvosome a probable DNA-RuvA(4)-RuvB(12)-RuvC(2) complex forms which resolves the HJ.

The protein resides in the cytoplasm. The catalysed reaction is ATP + H2O = ADP + phosphate + H(+). In terms of biological role, the RuvA-RuvB-RuvC complex processes Holliday junction (HJ) DNA during genetic recombination and DNA repair, while the RuvA-RuvB complex plays an important role in the rescue of blocked DNA replication forks via replication fork reversal (RFR). RuvA specifically binds to HJ cruciform DNA, conferring on it an open structure. The RuvB hexamer acts as an ATP-dependent pump, pulling dsDNA into and through the RuvAB complex. RuvB forms 2 homohexamers on either side of HJ DNA bound by 1 or 2 RuvA tetramers; 4 subunits per hexamer contact DNA at a time. Coordinated motions by a converter formed by DNA-disengaged RuvB subunits stimulates ATP hydrolysis and nucleotide exchange. Immobilization of the converter enables RuvB to convert the ATP-contained energy into a lever motion, pulling 2 nucleotides of DNA out of the RuvA tetramer per ATP hydrolyzed, thus driving DNA branch migration. The RuvB motors rotate together with the DNA substrate, which together with the progressing nucleotide cycle form the mechanistic basis for DNA recombination by continuous HJ branch migration. Branch migration allows RuvC to scan DNA until it finds its consensus sequence, where it cleaves and resolves cruciform DNA. The polypeptide is Holliday junction branch migration complex subunit RuvB (Neorickettsia sennetsu (strain ATCC VR-367 / Miyayama) (Ehrlichia sennetsu)).